The following is a 429-amino-acid chain: Adenylosuccinate synthetase (429 aa).

Residues G12 to K18 and G40 to T42 contribute to the GTP site. D13 serves as the catalytic Proton acceptor. Positions 13 and 40 each coordinate Mg(2+). IMP-binding positions include D13–K16, N38–H41, T128, R142, Q223, T238, and R302. Residue H41 is the Proton donor of the active site. T298 to R304 is a binding site for substrate. Residues R304, S330–D332, and S412–G414 each bind GTP.

The protein belongs to the adenylosuccinate synthetase family. Homodimer. The cofactor is Mg(2+).

The protein resides in the cytoplasm. It catalyses the reaction IMP + L-aspartate + GTP = N(6)-(1,2-dicarboxyethyl)-AMP + GDP + phosphate + 2 H(+). It functions in the pathway purine metabolism; AMP biosynthesis via de novo pathway; AMP from IMP: step 1/2. Its function is as follows. Plays an important role in the de novo pathway of purine nucleotide biosynthesis. Catalyzes the first committed step in the biosynthesis of AMP from IMP. The protein is Adenylosuccinate synthetase of Oceanobacillus iheyensis (strain DSM 14371 / CIP 107618 / JCM 11309 / KCTC 3954 / HTE831).